A 499-amino-acid polypeptide reads, in one-letter code: Lysine--tRNA ligase (499 aa).

Residues glutamate 410 and glutamate 417 each contribute to the Mg(2+) site.

The protein belongs to the class-II aminoacyl-tRNA synthetase family. As to quaternary structure, homodimer. Mg(2+) is required as a cofactor.

It is found in the cytoplasm. It carries out the reaction tRNA(Lys) + L-lysine + ATP = L-lysyl-tRNA(Lys) + AMP + diphosphate. This chain is Lysine--tRNA ligase (lysS), found in Bacillus subtilis (strain 168).